The following is a 783-amino-acid chain: Rho GTPase-activating protein gacR (783 aa).

The stretch at 138–188 (AKNRFDKARLSFDEASEQFKQLRKKQNNINNEKLLEAEEDLDYATQQFSDI) forms a coiled coil. The segment at 262 to 299 (QFEQTNSSRTISLPPPPPPKPTSSTPSSSPSPSPSSSI) is disordered. The segment covering 283–299 (TSSTPSSSPSPSPSSSI) has biased composition (low complexity). A Rho-GAP domain is found at 319–509 (MALSTITERE…FIISNFNNIF (191 aa)). Gly residues predominate over residues 527 to 539 (GSSGGGGGGGSSG). Residues 527-745 (GSSGGGGGGG…TTNSRPLSNS (219 aa)) form a disordered region. Low complexity-rich tracts occupy residues 568–589 (SVNTSSSQSSSSSSSSSFASSA), 599–630 (PSSSSSPIITTTSPNSNTNINSNTSVNTNINP), 641–651 (PKKISSSSNSL), and 661–698 (SIPEKSQNNITPTILSSSLSAPTSPTTTTTTNPLRSST). Over residues 706–738 (NRVSMYLQNSNTGVPLPSQKPQRVISNNNTTTN) the composition is skewed to polar residues.

Its subcellular location is the cytoplasm. Its function is as follows. Rho GTPase-activating protein involved in the signal transduction pathway. This Dictyostelium discoideum (Social amoeba) protein is Rho GTPase-activating protein gacR (gacR).